A 443-amino-acid chain; its full sequence is Methyl-coenzyme M reductase subunit beta (443 aa).

Y367 serves as a coordination point for coenzyme M. Residue G369 coordinates coenzyme B.

Belongs to the methyl-coenzyme M reductase beta subunit family. In terms of assembly, MCR is a hexamer of two alpha, two beta, and two gamma chains, forming a dimer of heterotrimers. Requires coenzyme F430 as cofactor.

It is found in the cytoplasm. It carries out the reaction coenzyme B + methyl-coenzyme M = methane + coenzyme M-coenzyme B heterodisulfide. Its pathway is one-carbon metabolism; methyl-coenzyme M reduction; methane from methyl-coenzyme M: step 1/1. Component of the methyl-coenzyme M reductase (MCR) I that catalyzes the reductive cleavage of methyl-coenzyme M (CoM-S-CH3 or 2-(methylthio)ethanesulfonate) using coenzyme B (CoB or 7-mercaptoheptanoylthreonine phosphate) as reductant which results in the production of methane and the mixed heterodisulfide of CoB and CoM (CoM-S-S-CoB). This is the final step in methanogenesis. The protein is Methyl-coenzyme M reductase subunit beta (mcrB) of Methanococcus vannielii.